A 4540-amino-acid polypeptide reads, in one-letter code: Dynein heavy chain, cytoplasmic (4540 aa).

Positions 1–1796 (MEESETQLNV…LIQMGNAQFH (1796 aa)) are stem. Coiled coils occupy residues 440 to 482 (EHIK…NVQQ), 698 to 722 (RVNY…KTKV), 794 to 827 (VKKF…AMKT), 975 to 995 (QQLI…MEQY), 1169 to 1251 (RSKK…LKMD), and 1295 to 1311 (QNKK…KQLN). AAA regions lie at residues 1797–2018 (YGFE…VLNS), 2091–2348 (KELA…FTRI), 2457–2705 (EIDP…WKYA), and 2796–3056 (QFNE…AKRF). Residues 1835-1842 (GPAGTGKT), 2129-2136 (GPCGCGKS), 2496-2503 (GPPGSGKT), and 2834-2841 (GSSGVGKT) each bind ATP. Coiled coils occupy residues 3076–3182 (NEKK…NAKQ), 3289–3367 (QLKY…RSQA), 3653–3688 (EDEK…VMNT), and 3820–3851 (QQLK…RWLN). The tract at residues 3076 to 3367 (NEKKSQLEDQ…VQEKVTRSQA (292 aa)) is stalk. Residues 3140–3159 (KKKEDSTRLSSDAEKKAKEM) form a disordered region. Residues 3444–3673 (LSRPSDRLNW…LKKEAAVIVQ (230 aa)) form an AAA 5 region. Residues 3908 to 4123 (ARKLINQILG…QRCSLDLIDE (216 aa)) are AAA 6. 2 coiled-coil regions span residues 4238-4259 (QKLI…TQIE) and 4313-4342 (RFLD…LAQG).

The protein belongs to the dynein heavy chain family. As to quaternary structure, consists of at least two heavy chains and a number of intermediate and light chains.

It is found in the cytoplasm. It localises to the cytoskeleton. Its function is as follows. Cytoplasmic dynein acts as a motor for the intracellular retrograde motility of vesicles and organelles along microtubules. Dynein has ATPase activity; the force-producing power stroke is thought to occur on release of ADP. This Paramecium tetraurelia protein is Dynein heavy chain, cytoplasmic (DHC-8).